The primary structure comprises 161 residues: SsrA-binding protein (161 aa).

This sequence belongs to the SmpB family.

The protein localises to the cytoplasm. Its function is as follows. Required for rescue of stalled ribosomes mediated by trans-translation. Binds to transfer-messenger RNA (tmRNA), required for stable association of tmRNA with ribosomes. tmRNA and SmpB together mimic tRNA shape, replacing the anticodon stem-loop with SmpB. tmRNA is encoded by the ssrA gene; the 2 termini fold to resemble tRNA(Ala) and it encodes a 'tag peptide', a short internal open reading frame. During trans-translation Ala-aminoacylated tmRNA acts like a tRNA, entering the A-site of stalled ribosomes, displacing the stalled mRNA. The ribosome then switches to translate the ORF on the tmRNA; the nascent peptide is terminated with the 'tag peptide' encoded by the tmRNA and targeted for degradation. The ribosome is freed to recommence translation, which seems to be the essential function of trans-translation. The protein is SsrA-binding protein of Haemophilus influenzae (strain 86-028NP).